A 331-amino-acid polypeptide reads, in one-letter code: Tungstate uptake system ATP-binding protein TupC (331 aa).

In terms of domain architecture, ABC transporter spans 2 to 230 (IEISNLFFNY…NQGVKFCNFI (229 aa)). ATP is bound at residue 34–41 (GANGSGKS).

It belongs to the ABC transporter superfamily. In terms of assembly, the complex is composed of two ATP-binding proteins (TupC), two transmembrane proteins (TupB) and a solute-binding protein (TupA).

It carries out the reaction tungstate(in) + ATP + H2O = tungstate(out) + ADP + phosphate + H(+). Part of an ABC transporter complex involved in ultra-high affinity tungstate uptake. Probably responsible for energy coupling to the transport system. This Campylobacter jejuni subsp. jejuni serotype O:2 (strain ATCC 700819 / NCTC 11168) protein is Tungstate uptake system ATP-binding protein TupC.